Reading from the N-terminus, the 186-residue chain is ATP synthase subunit delta (186 aa).

It belongs to the ATPase delta chain family. F-type ATPases have 2 components, F(1) - the catalytic core - and F(0) - the membrane proton channel. F(1) has five subunits: alpha(3), beta(3), gamma(1), delta(1), epsilon(1). F(0) has three main subunits: a(1), b(2) and c(10-14). The alpha and beta chains form an alternating ring which encloses part of the gamma chain. F(1) is attached to F(0) by a central stalk formed by the gamma and epsilon chains, while a peripheral stalk is formed by the delta and b chains.

The protein localises to the cell inner membrane. F(1)F(0) ATP synthase produces ATP from ADP in the presence of a proton or sodium gradient. F-type ATPases consist of two structural domains, F(1) containing the extramembraneous catalytic core and F(0) containing the membrane proton channel, linked together by a central stalk and a peripheral stalk. During catalysis, ATP synthesis in the catalytic domain of F(1) is coupled via a rotary mechanism of the central stalk subunits to proton translocation. Its function is as follows. This protein is part of the stalk that links CF(0) to CF(1). It either transmits conformational changes from CF(0) to CF(1) or is implicated in proton conduction. This chain is ATP synthase subunit delta, found in Leptospira interrogans serogroup Icterohaemorrhagiae serovar copenhageni (strain Fiocruz L1-130).